Consider the following 1262-residue polypeptide: Isoleucine--tRNA ligase, cytoplasmic (1262 aa).

Methionine 1 is modified (N-acetylmethionine). A 'HIGH' region motif is present at residues 48–58 (PFATGLPHYGH). The 'KMSKS' region motif lies at 600–604 (KMSKR). Position 603 (lysine 603) interacts with ATP. 2 positions are modified to phosphoserine: serine 1047 and serine 1049. Threonine 1058 is subject to Phosphothreonine.

Belongs to the class-I aminoacyl-tRNA synthetase family. As to quaternary structure, part of a multisubunit complex that groups tRNA ligases for Arg (RARS1), Asp (DARS1), Gln (QARS1), Ile (IARS1), Leu (LARS1), Lys (KARS1), Met (MARS1) the bifunctional ligase for Glu and Pro (EPRS1) and the auxiliary subunits AIMP1/p43, AIMP2/p38 and EEF1E1/p18. In terms of tissue distribution, expressed in liver and muscle (at protein level).

The protein resides in the cytoplasm. It is found in the cytosol. It catalyses the reaction tRNA(Ile) + L-isoleucine + ATP = L-isoleucyl-tRNA(Ile) + AMP + diphosphate. Its function is as follows. Catalyzes the specific attachment of an amino acid to its cognate tRNA in a 2 step reaction: the amino acid (AA) is first activated by ATP to form AA-AMP and then transferred to the acceptor end of the tRNA. The protein is Isoleucine--tRNA ligase, cytoplasmic of Homo sapiens (Human).